The following is a 456-amino-acid chain: Bifunctional protein GlmU (456 aa).

The interval 1-230 is pyrophosphorylase; it reads MDKRFAVVLA…FQETLGVNDR (230 aa). Residues 9 to 12, K23, Q73, and 78 to 79 contribute to the UDP-N-acetyl-alpha-D-glucosamine site; these read LAAG and GT. D103 contributes to the Mg(2+) binding site. Residues G140, E155, N170, and N228 each contribute to the UDP-N-acetyl-alpha-D-glucosamine site. Residue N228 coordinates Mg(2+). The tract at residues 231–251 is linker; the sequence is VALSQAEIYMKQRINKRHMQN. The segment at 252 to 456 is N-acetyltransferase; that stretch reads GVSLIDPDNT…EDYAENIHKK (205 aa). R333 and K351 together coordinate UDP-N-acetyl-alpha-D-glucosamine. Catalysis depends on H363, which acts as the Proton acceptor. 2 residues coordinate UDP-N-acetyl-alpha-D-glucosamine: Y366 and N377. Acetyl-CoA contacts are provided by residues 386–387, A423, and R440; that span reads NY.

It in the N-terminal section; belongs to the N-acetylglucosamine-1-phosphate uridyltransferase family. In the C-terminal section; belongs to the transferase hexapeptide repeat family. In terms of assembly, homotrimer. Mg(2+) serves as cofactor.

The protein localises to the cytoplasm. The enzyme catalyses alpha-D-glucosamine 1-phosphate + acetyl-CoA = N-acetyl-alpha-D-glucosamine 1-phosphate + CoA + H(+). It carries out the reaction N-acetyl-alpha-D-glucosamine 1-phosphate + UTP + H(+) = UDP-N-acetyl-alpha-D-glucosamine + diphosphate. The protein operates within nucleotide-sugar biosynthesis; UDP-N-acetyl-alpha-D-glucosamine biosynthesis; N-acetyl-alpha-D-glucosamine 1-phosphate from alpha-D-glucosamine 6-phosphate (route II): step 2/2. Its pathway is nucleotide-sugar biosynthesis; UDP-N-acetyl-alpha-D-glucosamine biosynthesis; UDP-N-acetyl-alpha-D-glucosamine from N-acetyl-alpha-D-glucosamine 1-phosphate: step 1/1. It functions in the pathway bacterial outer membrane biogenesis; LPS lipid A biosynthesis. In terms of biological role, catalyzes the last two sequential reactions in the de novo biosynthetic pathway for UDP-N-acetylglucosamine (UDP-GlcNAc). The C-terminal domain catalyzes the transfer of acetyl group from acetyl coenzyme A to glucosamine-1-phosphate (GlcN-1-P) to produce N-acetylglucosamine-1-phosphate (GlcNAc-1-P), which is converted into UDP-GlcNAc by the transfer of uridine 5-monophosphate (from uridine 5-triphosphate), a reaction catalyzed by the N-terminal domain. The sequence is that of Bifunctional protein GlmU from Bacillus licheniformis (strain ATCC 14580 / DSM 13 / JCM 2505 / CCUG 7422 / NBRC 12200 / NCIMB 9375 / NCTC 10341 / NRRL NRS-1264 / Gibson 46).